Reading from the N-terminus, the 155-residue chain is Pathogenesis-related protein B (155 aa).

The protein belongs to the BetVI family.

The protein is Pathogenesis-related protein B (PCPR1-3) of Petroselinum crispum (Parsley).